The sequence spans 299 residues: Acetaldehyde dehydrogenase 6 (299 aa).

The Acyl-thioester intermediate role is filled by C125. NAD(+)-binding positions include 156–164 (GAGPGTRAN) and N275.

This sequence belongs to the acetaldehyde dehydrogenase family.

It catalyses the reaction acetaldehyde + NAD(+) + CoA = acetyl-CoA + NADH + H(+). The protein is Acetaldehyde dehydrogenase 6 (hpdG) of Rhodococcus jostii (strain RHA1).